We begin with the raw amino-acid sequence, 333 residues long: Sodium/bile acid cotransporter 7 (333 aa).

Topologically, residues 1–10 are cytoplasmic; the sequence is MGLLERLRKE. The chain crosses the membrane as a helical span at residues 11-31; that stretch reads WFIAGIALVIAAARLEPAVGV. The Extracellular segment spans residues 32-37; sequence KGGPLK. A helical transmembrane segment spans residues 38–58; sequence PEITITYIAVSAIFFNSGLSL. Residues 59–71 lie on the Cytoplasmic side of the membrane; that stretch reads KTEELTSALMHVK. A helical membrane pass occupies residues 72–92; it reads LHLFVQIFTLVFFPTAIWLFL. Over 93-103 the chain is Extracellular; it reads QLLSITPINEW. The helical transmembrane segment at 104 to 124 threads the bilayer; that stretch reads LLKGLQTVGCMPPPVSSAVIL. Over 125 to 126 the chain is Cytoplasmic; that stretch reads TK. A helical transmembrane segment spans residues 127 to 147; the sequence is AVGGNEAAAIFNSAFGSFLLG. The Extracellular segment spans residues 148 to 151; sequence SSSS. Residues 152 to 172 form a helical membrane-spanning segment; sequence VPFTSIFSQLFMTVVVPLIIG. Residues 173-189 are Cytoplasmic-facing; that stretch reads QIVRRYIKDWLERRKPP. The chain crosses the membrane as a helical span at residues 190–210; sequence FGTISSCVLLMIIYTTFCDTF. Topologically, residues 211–222 are extracellular; the sequence is ANPNIDLDKFSL. The chain crosses the membrane as a helical span at residues 223–243; sequence IIIVFIIFSVQMSFMFLTFLF. The Cytoplasmic segment spans residues 244-258; it reads STRSNSGFTPADTVA. The chain crosses the membrane as a helical span at residues 259–279; it reads IIFCSTHKSLTLGIPMLKIVF. Topologically, residues 280–286 are extracellular; that stretch reads AGYEHLS. The chain crosses the membrane as a helical span at residues 287 to 307; the sequence is LISVPLLIYHPAQILLGSLLV. Topologically, residues 308–333 are cytoplasmic; that stretch reads PTIKSWMVSRQKALKLTRQPKVPVKV.

Belongs to the bile acid:sodium symporter (BASS) (TC 2.A.28) family.

Its subcellular location is the cell membrane. It localises to the endoplasmic reticulum membrane. The protein resides in the golgi apparatus membrane. Involved in teeth and skeletal development. Has an essential role in the biosynthesis and trafficking of glycosaminoglycans and glycoproteins to produce a proper functioning extracellular matrix. Required for extracellular matrix mineralization. Also involved in the regulation of cellular calcium homeostasis. Does not show transport activity towards bile acids or steroid sulfates. The protein is Sodium/bile acid cotransporter 7 (SLC10A7) of Gallus gallus (Chicken).